Consider the following 293-residue polypeptide: Cytidine deaminase (293 aa).

CMP/dCMP-type deaminase domains are found at residues 47-166 (EDRA…FGPA) and 186-293 (ESED…YQAV). Position 88 to 90 (88 to 90 (NME)) interacts with substrate. His-101 contributes to the Zn(2+) binding site. Glu-103 (proton donor) is an active-site residue. 2 residues coordinate Zn(2+): Cys-128 and Cys-131.

The protein belongs to the cytidine and deoxycytidylate deaminase family. As to quaternary structure, homodimer. Zn(2+) is required as a cofactor.

The catalysed reaction is cytidine + H2O + H(+) = uridine + NH4(+). The enzyme catalyses 2'-deoxycytidine + H2O + H(+) = 2'-deoxyuridine + NH4(+). Functionally, this enzyme scavenges exogenous and endogenous cytidine and 2'-deoxycytidine for UMP synthesis. The protein is Cytidine deaminase of Aeromonas salmonicida (strain A449).